The sequence spans 300 residues: Protoheme IX farnesyltransferase (300 aa).

A run of 9 helical transmembrane segments spans residues 24–44, 46–66, 99–119, 122–142, 145–165, 176–196, 220–240, 244–264, and 275–295; these read GLAI…IHEF, LETI…VGAS, AFTI…MINP, AMFG…LKTV, LSVF…WVAA, LFLI…WFLF, IVLY…GYTG, LTPV…VYAI, and AKTL…VYIL.

This sequence belongs to the UbiA prenyltransferase family. Protoheme IX farnesyltransferase subfamily.

The protein localises to the cell inner membrane. It catalyses the reaction heme b + (2E,6E)-farnesyl diphosphate + H2O = Fe(II)-heme o + diphosphate. Its pathway is porphyrin-containing compound metabolism; heme O biosynthesis; heme O from protoheme: step 1/1. Its function is as follows. Converts heme B (protoheme IX) to heme O by substitution of the vinyl group on carbon 2 of heme B porphyrin ring with a hydroxyethyl farnesyl side group. The polypeptide is Protoheme IX farnesyltransferase (Flavobacterium psychrophilum (strain ATCC 49511 / DSM 21280 / CIP 103535 / JIP02/86)).